The chain runs to 86 residues: MNSKIFAVLLLLGLLSCVLSDQYCPKSSITACKKMNIRNDCCKDDDCTGGSWCCATPCGNFCKYPTDRPGGKRAAGGKSCKTGYVY.

The signal sequence occupies residues 1–20 (MNSKIFAVLLLLGLLSCVLS). The WAP domain maps to 21-66 (DQYCPKSSITACKKMNIRNDCCKDDDCTGGSWCCATPCGNFCKYPT). 5 disulfides stabilise this stretch: Cys-24-Cys-54, Cys-32-Cys-58, Cys-41-Cys-53, Cys-42-Cys-80, and Cys-47-Cys-62.

Belongs to the venom protein 11 family. 01 (wap-1) subfamily. Contains 5 disulfide bonds. As to expression, expressed by the venom gland.

It is found in the secreted. Functionally, has antibacterial activity. This chain is U15-lycotoxin-Ls1d, found in Lycosa singoriensis (Wolf spider).